Reading from the N-terminus, the 776-residue chain is MDPKDLLKPSSGSPAVRGSPHYNDKPGNVIEFFGNYRGGVSVSVSASCPTSTASQSNTRQQQHFQKQLTATGDSTNGLNNNVPQPDLSKAVSLSMGLYMGESDTKVMSSDIAFPSQEQIGISTGETDFSLLEESIANLQAKSLAPDKLIEISEDPGGFKCDISAQPRPSMGQGGSNGSSSTNLFPKDQCTFDLLRDLGISPDSPLDGKSNPWLDPLFDEQEAFNLLSPLGTGDPFFMKSEVLSEGSKTLSLEDGTQRLGDHAKDMLLPSADRPISQVKTEKEDYIELCTPGVVNEEKFGPVYCVGNFSGSGLFGNKSSAISVHGVSTSGGQMYHYDLNTATISQQDVKPVFNLGSPGTSIAEGWNRCHGSGNDTAASPGNVNFPNRSVFSNGYSSPGIRSDASPSPSTSSTSTGPPPKLCLVCSDEASGCHYGVLTCGSCKVFFKRAVEGQHNYLCAGRNDCIIDKIRRKNCPACRYRKCLQAGMNLEARKTKKKIKGIQQSTTATARESPETSMTRTLVPASVAQLTPTLISLLEVIEPEVLYSGYDSSIPDTTRRLMSSLNMLGGRQVVSAVRWAKAIPGFRNLHLDDQMTLLQYSWMFLMVFALGWRSYKQTNGSILYFAPDLVITEDRMHLPFMQERCQEMLKIAGEMSSLQISYDEYLCMKVLLLMCTIPKEGLKSHALFEEIRMTYIKELGKAIVKREGNSSQNWQRFYQLTKLLDSMHEVAENLLAFCFLSFLDKSMSIEFPDMLSEIISNQIPKYSSGNLKKLLFHQK.

Disordered stretches follow at residues 1–25, 47–86, and 394–415; these read MDPK…YNDK, SCPT…PQPD, and SSPG…STGP. Positions 1 to 419 are modulating; it reads MDPKDLLKPS…STSTGPPPKL (419 aa). The span at 47–83 shows a compositional bias: polar residues; that stretch reads SCPTSTASQSNTRQQQHFQKQLTATGDSTNGLNNNVP. The segment covering 403–413 has biased composition (low complexity); sequence SPSPSTSSTST. 2 consecutive NR C4-type zinc fingers follow at residues 420–440 and 456–480; these read CLVC…CGSC and CAGR…YRKC. Residues 420–485 constitute a DNA-binding region (nuclear receptor); sequence CLVCSDEASG…RYRKCLQAGM (66 aa). A hinge region spans residues 486–522; the sequence is NLEARKTKKKIKGIQQSTTATARESPETSMTRTLVPA. The region spanning 523–757 is the NR LBD domain; sequence SVAQLTPTLI…FPDMLSEIIS (235 aa).

Belongs to the nuclear hormone receptor family. NR3 subfamily. In terms of assembly, heteromultimeric cytoplasmic complex with HSP90. Upon ligand binding the complex undergoes a conformation change and moves to the nucleus, where it dissociates. Binds to DNA as a homodimer, and as heterodimer with NR3C2. Interaction with numerous other transcription factors modulates transcription activation. As to expression, expressed in liver with relative abundance.

It is found in the cytoplasm. The protein resides in the nucleus. Its subcellular location is the mitochondrion. It localises to the cytoskeleton. The protein localises to the spindle. It is found in the microtubule organizing center. The protein resides in the centrosome. Functionally, receptor for glucocorticoids (GC). Has a dual mode of action: as a transcription factor that binds to glucocorticoid response elements (GRE), both for nuclear and mitochondrial DNA, and as a modulator of other transcription factors. Affects inflammatory responses, cellular proliferation and differentiation in target tissues. Involved in chromatin remodeling. Plays a role in rapid mRNA degradation by binding to the 5' UTR of target mRNAs and interacting with PNRC2 in a ligand-dependent manner which recruits the RNA helicase UPF1 and the mRNA-decapping enzyme DCP1A, leading to RNA decay. Could act as a coactivator for STAT5-dependent transcription upon growth hormone (GH) stimulation and could reveal an essential role of hepatic GR in the control of body growth. Mediates glucocorticoid-induced apoptosis. Promotes accurate chromosome segregation during mitosis. May act as a tumor suppressor. May play a negative role in adipogenesis through the regulation of lipolytic and antilipogenic gene expression. The polypeptide is Glucocorticoid receptor (nr3c1) (Xenopus laevis (African clawed frog)).